A 479-amino-acid chain; its full sequence is Glutamate--tRNA ligase 2 (479 aa).

Residues 10–20 (PSPTGSLHIGG) carry the 'HIGH' region motif. The short motif at 243 to 247 (KLSKR) is the 'KMSKS' region element. ATP is bound at residue Lys246.

This sequence belongs to the class-I aminoacyl-tRNA synthetase family. Glutamate--tRNA ligase type 1 subfamily. As to quaternary structure, monomer.

It is found in the cytoplasm. The catalysed reaction is tRNA(Glu) + L-glutamate + ATP = L-glutamyl-tRNA(Glu) + AMP + diphosphate. Its function is as follows. Catalyzes the attachment of glutamate to tRNA(Glu) in a two-step reaction: glutamate is first activated by ATP to form Glu-AMP and then transferred to the acceptor end of tRNA(Glu). This Thermoanaerobacter pseudethanolicus (strain ATCC 33223 / 39E) (Clostridium thermohydrosulfuricum) protein is Glutamate--tRNA ligase 2.